Reading from the N-terminus, the 118-residue chain is Appetite-regulating hormone (118 aa).

An N-terminal signal peptide occupies residues 1–24; that stretch reads MPSTGTICSLLLLSVLLMADLAMA. A lipid anchor (O-decanoyl serine; alternate) is attached at Ser27. Ser27 carries the O-hexanoyl serine; alternate lipid modification. Ser27 is lipidated: O-octanoyl serine; alternate. A disordered region spans residues 29–50; that stretch reads LSPEHQKVQQRKESKKPAAKLK. The segment covering 32-44 has biased composition (basic and acidic residues); that stretch reads EHQKVQQRKESKK. A propeptide spans 53–76 (removed in mature form); that stretch reads ALEGWLGPEDSGEVEGTEDKLEIR. Residue Leu99 is modified to Leucine amide. Positions 100–118 are cleaved as a propeptide — removed in mature form; that stretch reads GKFLQDILWEEVTEAPADK.

It belongs to the motilin family. In terms of processing, O-octanoylated by GOAT/MBOAT4. O-octanoylation is essential for ghrelin activity. Post-translationally, amidation of Leu-99 is essential for obestatin activity.

The protein localises to the secreted. Ghrelin is the ligand for growth hormone secretagogue receptor type 1 (GHSR). Induces the release of growth hormone from the pituitary. Has an appetite-stimulating effect, induces adiposity and stimulates gastric acid secretion. Involved in growth regulation. Its function is as follows. Obestatin may be the ligand for GPR39. May have an appetite-reducing effect resulting in decreased food intake. May reduce gastric emptying activity and jejunal motility. This is Appetite-regulating hormone (GHRL) from Sus scrofa (Pig).